Consider the following 685-residue polypeptide: DNA-directed RNA polymerase subunit beta' (685 aa).

Positions 69, 71, 87, and 90 each coordinate Zn(2+). The Mg(2+) site is built by D489, D491, and D493.

Belongs to the RNA polymerase beta' chain family. RpoC1 subfamily. In terms of assembly, in plastids the minimal PEP RNA polymerase catalytic core is composed of four subunits: alpha, beta, beta', and beta''. When a (nuclear-encoded) sigma factor is associated with the core the holoenzyme is formed, which can initiate transcription. Mg(2+) is required as a cofactor. It depends on Zn(2+) as a cofactor.

The protein localises to the plastid. The protein resides in the chloroplast. It carries out the reaction RNA(n) + a ribonucleoside 5'-triphosphate = RNA(n+1) + diphosphate. In terms of biological role, DNA-dependent RNA polymerase catalyzes the transcription of DNA into RNA using the four ribonucleoside triphosphates as substrates. This chain is DNA-directed RNA polymerase subunit beta', found in Buxus microphylla (Littleleaf boxwood).